We begin with the raw amino-acid sequence, 477 residues long: Tail sheath protein (477 aa).

This sequence belongs to the myoviridae tail sheath protein family. Homomultimer.

It is found in the virion. The protein resides in the host cytoplasm. Functionally, polymerizes as an extended structure around the baseplate-tail tube complex. During ejection, the sheath shifts to a contracted form, thereby making the inner tail tube protrude through the host cell envelope. The protein is Tail sheath protein of Burkholderia phage BcepMu (isolate -/United States/Summer/2002) (Bacteriophage BcepMu).